The chain runs to 594 residues: Elongation factor 4 (594 aa).

One can recognise a tr-type G domain in the interval 2–184 (KNIRNFSIIA…TIVAKVPAPE (183 aa)). GTP-binding positions include 14–19 (DHGKST) and 131–134 (NKID).

It belongs to the TRAFAC class translation factor GTPase superfamily. Classic translation factor GTPase family. LepA subfamily.

It is found in the cell inner membrane. The enzyme catalyses GTP + H2O = GDP + phosphate + H(+). Its function is as follows. Required for accurate and efficient protein synthesis under certain stress conditions. May act as a fidelity factor of the translation reaction, by catalyzing a one-codon backward translocation of tRNAs on improperly translocated ribosomes. Back-translocation proceeds from a post-translocation (POST) complex to a pre-translocation (PRE) complex, thus giving elongation factor G a second chance to translocate the tRNAs correctly. Binds to ribosomes in a GTP-dependent manner. This Francisella tularensis subsp. holarctica (strain FTNF002-00 / FTA) protein is Elongation factor 4.